A 331-amino-acid polypeptide reads, in one-letter code: uncharacterized protein (331 aa).

43 to 50 (GANESGKS) is an ATP binding site.

This is an uncharacterized protein from Methanocaldococcus jannaschii (strain ATCC 43067 / DSM 2661 / JAL-1 / JCM 10045 / NBRC 100440) (Methanococcus jannaschii).